Reading from the N-terminus, the 228-residue chain is uncharacterized protein (228 aa).

Its subcellular location is the mitochondrion. This is an uncharacterized protein from Emericella nidulans (Aspergillus nidulans).